A 679-amino-acid chain; its full sequence is Translation initiation factor IF-2 (679 aa).

In terms of domain architecture, tr-type G spans Lys178–Lys347. The segment at Gly187–Thr194 is G1. Gly187–Thr194 is a binding site for GTP. The tract at residues Gly212–His216 is G2. Residues Asp233–Gly236 are G3. Residues Asp233–His237 and Asn287–Asp290 each bind GTP. Residues Asn287–Asp290 are G4. The G5 stretch occupies residues Ser323–Lys325.

It belongs to the TRAFAC class translation factor GTPase superfamily. Classic translation factor GTPase family. IF-2 subfamily.

It localises to the cytoplasm. In terms of biological role, one of the essential components for the initiation of protein synthesis. Protects formylmethionyl-tRNA from spontaneous hydrolysis and promotes its binding to the 30S ribosomal subunits. Also involved in the hydrolysis of GTP during the formation of the 70S ribosomal complex. The protein is Translation initiation factor IF-2 of Clostridium perfringens (strain ATCC 13124 / DSM 756 / JCM 1290 / NCIMB 6125 / NCTC 8237 / Type A).